The following is an 872-amino-acid chain: Alanine--tRNA ligase (872 aa).

Residues His567, His571, Cys669, and His673 each coordinate Zn(2+).

The protein belongs to the class-II aminoacyl-tRNA synthetase family. It depends on Zn(2+) as a cofactor.

It localises to the cytoplasm. The catalysed reaction is tRNA(Ala) + L-alanine + ATP = L-alanyl-tRNA(Ala) + AMP + diphosphate. Its function is as follows. Catalyzes the attachment of alanine to tRNA(Ala) in a two-step reaction: alanine is first activated by ATP to form Ala-AMP and then transferred to the acceptor end of tRNA(Ala). Also edits incorrectly charged Ser-tRNA(Ala) and Gly-tRNA(Ala) via its editing domain. This Streptococcus gordonii (strain Challis / ATCC 35105 / BCRC 15272 / CH1 / DL1 / V288) protein is Alanine--tRNA ligase.